We begin with the raw amino-acid sequence, 612 residues long: UvrABC system protein C (612 aa).

The 79-residue stretch at Lys21 to Ile99 folds into the GIY-YIG domain. The 36-residue stretch at Glu209–Val244 folds into the UVR domain.

The protein belongs to the UvrC family. In terms of assembly, interacts with UvrB in an incision complex.

Its subcellular location is the cytoplasm. Functionally, the UvrABC repair system catalyzes the recognition and processing of DNA lesions. UvrC both incises the 5' and 3' sides of the lesion. The N-terminal half is responsible for the 3' incision and the C-terminal half is responsible for the 5' incision. This chain is UvrABC system protein C, found in Saccharophagus degradans (strain 2-40 / ATCC 43961 / DSM 17024).